Reading from the N-terminus, the 151-residue chain is Ribosome maturation factor RimP (151 aa).

Belongs to the RimP family.

It localises to the cytoplasm. Functionally, required for maturation of 30S ribosomal subunits. This is Ribosome maturation factor RimP from Caldicellulosiruptor saccharolyticus (strain ATCC 43494 / DSM 8903 / Tp8T 6331).